The sequence spans 141 residues: Lutropin subunit beta (141 aa).

The N-terminal stretch at 1–20 (MEMLQGLLLWLLLSVGGVWA) is a signal peptide. 6 cysteine pairs are disulfide-bonded: Cys29–Cys77, Cys43–Cys92, Cys46–Cys130, Cys54–Cys108, Cys58–Cys110, and Cys113–Cys120. Asn33 carries N-linked (GlcNAc...) asparagine glycosylation.

This sequence belongs to the glycoprotein hormones subunit beta family. In terms of assembly, heterodimer of a common alpha chain and a unique beta chain which confers biological specificity to thyrotropin, lutropin, follitropin and gonadotropin.

The protein resides in the secreted. Its function is as follows. Promotes spermatogenesis and ovulation by stimulating the testes and ovaries to synthesize steroids. The sequence is that of Lutropin subunit beta (LHB1) from Ceratotherium simum (White rhinoceros).